Here is a 167-residue protein sequence, read N- to C-terminus: Signal peptidase complex catalytic subunit SEC11 (167 aa).

At 1–12 (MNIRHQLVQFLN) the chain is on the cytoplasmic side. A helical; Signal-anchor for type II membrane protein membrane pass occupies residues 13–30 (LALVLSSAFMAWKTLSVI). The Lumenal portion of the chain corresponds to 31-167 (TNSHSPIVVV…MGISSLLSNE (137 aa)). Catalysis depends on charge relay system residues serine 44, histidine 83, and aspartate 109. A C-terminal short (CTS) helix region spans residues 153–164 (TLLGLMGISSLL).

It belongs to the peptidase S26B family. Component of the signal peptidase complex (SPC) composed of a catalytic subunit SEC11 and three accessory subunits SPC1, SPC2 and SPC3. The complex induces a local thinning of the ER membrane which is used to measure the length of the signal peptide (SP) h-region of protein substrates. This ensures the selectivity of the complex towards h-regions shorter than 18-20 amino acids. SPC associates with the translocon complex.

It localises to the endoplasmic reticulum membrane. The enzyme catalyses Cleavage of hydrophobic, N-terminal signal or leader sequences from secreted and periplasmic proteins.. In terms of biological role, catalytic component of the signal peptidase complex (SPC) which catalyzes the cleavage of N-terminal signal sequences from nascent proteins as they are translocated into the lumen of the endoplasmic reticulum. Specifically cleaves N-terminal signal peptides that contain a hydrophobic alpha-helix (h-region) shorter than 18-20 amino acids. In Debaryomyces hansenii (strain ATCC 36239 / CBS 767 / BCRC 21394 / JCM 1990 / NBRC 0083 / IGC 2968) (Yeast), this protein is Signal peptidase complex catalytic subunit SEC11 (SEC11).